A 253-amino-acid chain; its full sequence is Non-homologous end joining protein Ku (253 aa).

Residues 9–192 form the Ku domain; the sequence is ISFGLVNIPV…EITEEELELA (184 aa).

Belongs to the prokaryotic Ku family. In terms of assembly, homodimer. Interacts with LigD.

Functionally, with LigD forms a non-homologous end joining (NHEJ) DNA repair enzyme, which repairs dsDNA breaks with reduced fidelity. Binds linear dsDNA with 5'- and 3'- overhangs but not closed circular dsDNA nor ssDNA. Recruits and stimulates the ligase activity of LigD. The polypeptide is Non-homologous end joining protein Ku (Archaeoglobus fulgidus (strain ATCC 49558 / DSM 4304 / JCM 9628 / NBRC 100126 / VC-16)).